We begin with the raw amino-acid sequence, 116 residues long: Nucleoid-associated protein A9601_00191 (116 aa).

The protein belongs to the YbaB/EbfC family. As to quaternary structure, homodimer.

The protein localises to the cytoplasm. It localises to the nucleoid. Binds to DNA and alters its conformation. May be involved in regulation of gene expression, nucleoid organization and DNA protection. This chain is Nucleoid-associated protein A9601_00191, found in Prochlorococcus marinus (strain AS9601).